The primary structure comprises 196 residues: Peroxynitrite isomerase (196 aa).

The GXWXGXG motif lies at 46-52 (GVWRGRG). His186 is a binding site for heme b.

Belongs to the nitrobindin family. In terms of assembly, homodimer. The cofactor is heme b.

The enzyme catalyses peroxynitrite = nitrate. The protein operates within nitrogen metabolism. Its function is as follows. Heme-binding protein able to scavenge peroxynitrite and to protect free L-tyrosine against peroxynitrite-mediated nitration, by acting as a peroxynitrite isomerase that converts peroxynitrite to nitrate. Therefore, this protein likely plays a role in peroxynitrite sensing and in the detoxification of reactive nitrogen and oxygen species (RNS and ROS, respectively). Is able to bind nitric oxide (NO) in vitro, but may act as a sensor of peroxynitrite levels in vivo. This chain is Peroxynitrite isomerase, found in Salinispora tropica (strain ATCC BAA-916 / DSM 44818 / JCM 13857 / NBRC 105044 / CNB-440).